A 273-amino-acid polypeptide reads, in one-letter code: Bifunctional protein FolD (273 aa).

NADP(+) is bound by residues 155 to 157 (GRS), serine 182, and isoleucine 223.

The protein belongs to the tetrahydrofolate dehydrogenase/cyclohydrolase family. In terms of assembly, homodimer.

The catalysed reaction is (6R)-5,10-methylene-5,6,7,8-tetrahydrofolate + NADP(+) = (6R)-5,10-methenyltetrahydrofolate + NADPH. It catalyses the reaction (6R)-5,10-methenyltetrahydrofolate + H2O = (6R)-10-formyltetrahydrofolate + H(+). It functions in the pathway one-carbon metabolism; tetrahydrofolate interconversion. In terms of biological role, catalyzes the oxidation of 5,10-methylenetetrahydrofolate to 5,10-methenyltetrahydrofolate and then the hydrolysis of 5,10-methenyltetrahydrofolate to 10-formyltetrahydrofolate. The protein is Bifunctional protein FolD of Pseudothermotoga lettingae (strain ATCC BAA-301 / DSM 14385 / NBRC 107922 / TMO) (Thermotoga lettingae).